A 226-amino-acid polypeptide reads, in one-letter code: UPF0758 protein M28_Spy0816 (226 aa).

Positions 103 to 225 (SVLTSVQVAE…YYSFREKSTL (123 aa)) constitute an MPN domain. Zn(2+)-binding residues include histidine 174, histidine 176, and aspartate 187. A JAMM motif motif is present at residues 174-187 (HNHPSGNIEPSSND).

This sequence belongs to the UPF0758 family.

The chain is UPF0758 protein M28_Spy0816 from Streptococcus pyogenes serotype M28 (strain MGAS6180).